Here is a 342-residue protein sequence, read N- to C-terminus: tRNA-specific 2-thiouridylase MnmA (342 aa).

ATP-binding positions include 6-13 (GMSGGVDS) and leucine 32. The active-site Nucleophile is the cysteine 99. Cysteine 99 and cysteine 190 are joined by a disulfide. Glycine 124 contacts ATP. The interaction with tRNA stretch occupies residues 140–142 (KDQ). The Cysteine persulfide intermediate role is filled by cysteine 190. An interaction with tRNA region spans residues 292 to 293 (RY).

It belongs to the MnmA/TRMU family.

It is found in the cytoplasm. The catalysed reaction is S-sulfanyl-L-cysteinyl-[protein] + uridine(34) in tRNA + AH2 + ATP = 2-thiouridine(34) in tRNA + L-cysteinyl-[protein] + A + AMP + diphosphate + H(+). Functionally, catalyzes the 2-thiolation of uridine at the wobble position (U34) of tRNA, leading to the formation of s(2)U34. In Hydrogenobaculum sp. (strain Y04AAS1), this protein is tRNA-specific 2-thiouridylase MnmA.